A 558-amino-acid polypeptide reads, in one-letter code: Glutamine--tRNA ligase (558 aa).

Positions Pro-36 to His-46 match the 'HIGH' region motif. ATP contacts are provided by residues Glu-37–Asn-39 and His-43–Ser-49. Residues Asp-69 and Tyr-214 each contribute to the L-glutamine site. Residues Thr-233, Arg-263–Leu-264, and Leu-271–Lys-273 each bind ATP. The 'KMSKS' region signature appears at Leu-270–Arg-274.

It belongs to the class-I aminoacyl-tRNA synthetase family. Monomer.

It localises to the cytoplasm. It carries out the reaction tRNA(Gln) + L-glutamine + ATP = L-glutaminyl-tRNA(Gln) + AMP + diphosphate. The protein is Glutamine--tRNA ligase of Nitrobacter hamburgensis (strain DSM 10229 / NCIMB 13809 / X14).